A 142-amino-acid chain; its full sequence is Putative pre-16S rRNA nuclease (142 aa).

It belongs to the YqgF nuclease family.

The protein resides in the cytoplasm. Functionally, could be a nuclease involved in processing of the 5'-end of pre-16S rRNA. In Staphylococcus haemolyticus (strain JCSC1435), this protein is Putative pre-16S rRNA nuclease.